Reading from the N-terminus, the 54-residue chain is U7-ctenitoxin-Pk1a (54 aa).

Cystine bridges form between C3–C17, C10–C23, C14–C52, C16–C37, and C25–C35.

Expressed by the venom gland.

The protein resides in the secreted. In terms of biological role, blocks voltage-gated sodium channels (Nav). Causes immediate spastic paralysis and death in mice within 1 minute of injection at dose levels of 1.5 ug per mouse. The polypeptide is U7-ctenitoxin-Pk1a (Phoneutria keyserlingi (Brazilian wandering spider)).